A 101-amino-acid chain; its full sequence is Small ribosomal subunit protein uS14 (101 aa).

The protein belongs to the universal ribosomal protein uS14 family. In terms of assembly, part of the 30S ribosomal subunit. Contacts proteins S3 and S10.

Binds 16S rRNA, required for the assembly of 30S particles and may also be responsible for determining the conformation of the 16S rRNA at the A site. This Photobacterium profundum (strain SS9) protein is Small ribosomal subunit protein uS14.